The chain runs to 315 residues: Methionyl-tRNA formyltransferase (315 aa).

(6S)-5,6,7,8-tetrahydrofolate is bound at residue 113-116; sequence SLLP.

The protein belongs to the Fmt family.

The enzyme catalyses L-methionyl-tRNA(fMet) + (6R)-10-formyltetrahydrofolate = N-formyl-L-methionyl-tRNA(fMet) + (6S)-5,6,7,8-tetrahydrofolate + H(+). Its function is as follows. Attaches a formyl group to the free amino group of methionyl-tRNA(fMet). The formyl group appears to play a dual role in the initiator identity of N-formylmethionyl-tRNA by promoting its recognition by IF2 and preventing the misappropriation of this tRNA by the elongation apparatus. The protein is Methionyl-tRNA formyltransferase of Escherichia coli O45:K1 (strain S88 / ExPEC).